Consider the following 261-residue polypeptide: tRNA pseudouridine synthase A (261 aa).

Asp-51 serves as the catalytic Nucleophile. Tyr-109 lines the substrate pocket.

This sequence belongs to the tRNA pseudouridine synthase TruA family. In terms of assembly, homodimer.

The enzyme catalyses uridine(38/39/40) in tRNA = pseudouridine(38/39/40) in tRNA. Formation of pseudouridine at positions 38, 39 and 40 in the anticodon stem and loop of transfer RNAs. The chain is tRNA pseudouridine synthase A from Shewanella pealeana (strain ATCC 700345 / ANG-SQ1).